The following is an 89-amino-acid chain: uncharacterized protein (89 aa).

The first 19 residues, 1 to 19 (MQLTKTQFVRCVFLLLANS), serve as a signal peptide directing secretion.

This is an uncharacterized protein from Sulfolobus islandicus filamentous virus (isolate Iceland/Hveragerdi) (SIFV).